A 1887-amino-acid polypeptide reads, in one-letter code: Fatty acid synthase subunit alpha (1887 aa).

Residue Lys37 forms a Glycyl lysine isopeptide (Lys-Gly) (interchain with G-Cter in ubiquitin) linkage. Position 50 is a phosphoserine (Ser50). Residues 96-120 (ELAAKEEPAKEEAPAPTPAASAPAP) are disordered. Basic and acidic residues predominate over residues 98–108 (AAKEEPAKEEA). The 76-residue stretch at 145-220 (VKASLLLHVL…ETFQDTFSGA (76 aa)) folds into the Carrier domain. Ser180 carries the O-(pantetheine 4'-phosphoryl)serine modification. Ser523 carries the phosphoserine modification. Positions 675 to 874 (DKYVLITGAG…CGAIIGWTRG (200 aa)) are beta-ketoacyl reductase. Ser958 is subject to Phosphoserine. A Ketosynthase family 3 (KS3) domain is found at 1123-1657 (QEVIVEEDLE…QKGGQAIVVH (535 aa)). The active-site For beta-ketoacyl synthase activity is the Cys1305. Ser1440 is modified (phosphoserine). Active-site for beta-ketoacyl synthase activity residues include His1542 and His1583. 3 residues coordinate Mg(2+): Asp1772, Val1773, and Glu1774. Residues 1772 to 1774 (DVE), Tyr1798, Ser1808, 1817 to 1827 (EAVFKSLGVKS), 1841 to 1844 (RVNK), and 1871 to 1873 (ISH) contribute to the acetyl-CoA site. 2 residues coordinate Mg(2+): Ser1872 and His1873.

It belongs to the thiolase-like superfamily. Fungal fatty acid synthetase subunit alpha family. As to quaternary structure, [Alpha(6)beta(6)] hexamers of two multifunctional subunits (alpha and beta). 4'-phosphopantetheine is transferred from CoA to a specific serine of the Acyl carrier domain by the C-terminal PPT domain. This modification is essential for activity because fatty acids are bound in thioester linkage to the sulfhydryl of the prosthetic group.

It catalyses the reaction acetyl-CoA + n malonyl-CoA + 2n NADPH + 4n H(+) = a long-chain-acyl-CoA + n CoA + n CO2 + 2n NADP(+).. It carries out the reaction a fatty acyl-[ACP] + malonyl-[ACP] + H(+) = a 3-oxoacyl-[ACP] + holo-[ACP] + CO2. The enzyme catalyses a (3R)-hydroxyacyl-[ACP] + NADP(+) = a 3-oxoacyl-[ACP] + NADPH + H(+). With respect to regulation, inhibited by cerulenin by covalent binding to active site of the ketoacyl synthase (KS) region. In terms of biological role, fatty acid synthetase catalyzes the formation of long-chain fatty acids from acetyl-CoA, malonyl-CoA and NADPH. The alpha subunit contains domains for: acyl carrier protein, 3-oxoacyl-[acyl-carrier-protein] reductase, and 3-oxoacyl-[acyl-carrier-protein] synthase. This subunit coordinates the binding of the six beta subunits to the enzyme complex. This is Fatty acid synthase subunit alpha (FAS2) from Saccharomyces cerevisiae (strain ATCC 204508 / S288c) (Baker's yeast).